Here is a 276-residue protein sequence, read N- to C-terminus: NH(3)-dependent NAD(+) synthetase (276 aa).

43 to 50 lines the ATP pocket; sequence GISGGVDS. Aspartate 49 provides a ligand contact to Mg(2+). Arginine 146 lines the deamido-NAD(+) pocket. Threonine 166 lines the ATP pocket. A Mg(2+)-binding site is contributed by glutamate 171. Residues lysine 179 and aspartate 186 each contribute to the deamido-NAD(+) site. Residues lysine 195 and threonine 217 each contribute to the ATP site. 266–267 lines the deamido-NAD(+) pocket; sequence HK.

It belongs to the NAD synthetase family. As to quaternary structure, homodimer.

It catalyses the reaction deamido-NAD(+) + NH4(+) + ATP = AMP + diphosphate + NAD(+) + H(+). The protein operates within cofactor biosynthesis; NAD(+) biosynthesis; NAD(+) from deamido-NAD(+) (ammonia route): step 1/1. In terms of biological role, catalyzes the ATP-dependent amidation of deamido-NAD to form NAD. Uses ammonia as a nitrogen source. The polypeptide is NH(3)-dependent NAD(+) synthetase (Vibrio cholerae serotype O1 (strain ATCC 39541 / Classical Ogawa 395 / O395)).